A 246-amino-acid polypeptide reads, in one-letter code: Large ribosomal subunit protein uL3 (246 aa).

Residue glutamine 151 is modified to N5-methylglutamine.

This sequence belongs to the universal ribosomal protein uL3 family. As to quaternary structure, part of the 50S ribosomal subunit. Forms a cluster with proteins L14 and L19. In terms of processing, methylated by PrmB.

Its function is as follows. One of the primary rRNA binding proteins, it binds directly near the 3'-end of the 23S rRNA, where it nucleates assembly of the 50S subunit. The sequence is that of Large ribosomal subunit protein uL3 from Bartonella henselae (strain ATCC 49882 / DSM 28221 / CCUG 30454 / Houston 1) (Rochalimaea henselae).